A 660-amino-acid polypeptide reads, in one-letter code: Bifunctional polymyxin resistance protein ArnA (660 aa).

Residues 1 to 304 form a formyltransferase ArnAFT region; it reads MKTVVFAYHD…TLGLVQGSRL (304 aa). A (6R)-10-formyltetrahydrofolate-binding site is contributed by 86 to 88; that stretch reads HLI. The active-site Proton donor; for formyltransferase activity is the His104. Residues Arg114 and 136–140 contribute to the (6R)-10-formyltetrahydrofolate site; that span reads VKRAD. Positions 314–660 are dehydrogenase ArnADH; the sequence is RRTRVLILGV…RTVDLTDKPS (347 aa). NAD(+)-binding positions include Asp347 and 368–369; that span reads DI. Residues Ala393, Tyr398, and 432–433 contribute to the UDP-alpha-D-glucuronate site; that span reads TS. Residue Glu434 is the Proton acceptor; for decarboxylase activity of the active site. UDP-alpha-D-glucuronate-binding positions include Arg460, Asn492, 526–535, and Tyr613; that span reads KLIDGGKQKR. Arg619 acts as the Proton donor; for decarboxylase activity in catalysis.

The protein in the N-terminal section; belongs to the Fmt family. UDP-L-Ara4N formyltransferase subfamily. In the C-terminal section; belongs to the NAD(P)-dependent epimerase/dehydratase family. UDP-glucuronic acid decarboxylase subfamily. Homohexamer, formed by a dimer of trimers.

It carries out the reaction UDP-alpha-D-glucuronate + NAD(+) = UDP-beta-L-threo-pentopyranos-4-ulose + CO2 + NADH. The enzyme catalyses UDP-4-amino-4-deoxy-beta-L-arabinose + (6R)-10-formyltetrahydrofolate = UDP-4-deoxy-4-formamido-beta-L-arabinose + (6S)-5,6,7,8-tetrahydrofolate + H(+). It functions in the pathway nucleotide-sugar biosynthesis; UDP-4-deoxy-4-formamido-beta-L-arabinose biosynthesis; UDP-4-deoxy-4-formamido-beta-L-arabinose from UDP-alpha-D-glucuronate: step 1/3. Its pathway is nucleotide-sugar biosynthesis; UDP-4-deoxy-4-formamido-beta-L-arabinose biosynthesis; UDP-4-deoxy-4-formamido-beta-L-arabinose from UDP-alpha-D-glucuronate: step 3/3. It participates in bacterial outer membrane biogenesis; lipopolysaccharide biosynthesis. Functionally, bifunctional enzyme that catalyzes the oxidative decarboxylation of UDP-glucuronic acid (UDP-GlcUA) to UDP-4-keto-arabinose (UDP-Ara4O) and the addition of a formyl group to UDP-4-amino-4-deoxy-L-arabinose (UDP-L-Ara4N) to form UDP-L-4-formamido-arabinose (UDP-L-Ara4FN). The modified arabinose is attached to lipid A and is required for resistance to polymyxin and cationic antimicrobial peptides. This chain is Bifunctional polymyxin resistance protein ArnA, found in Escherichia coli O6:H1 (strain CFT073 / ATCC 700928 / UPEC).